The following is a 315-amino-acid chain: Olfactory receptor 10H5 (315 aa).

At 1 to 25 the chain is on the extracellular side; the sequence is MQGLNHTSVSEFILVGFSAFPHLQL. An N-linked (GlcNAc...) asparagine glycan is attached at Asn-5. The helical transmembrane segment at 26-46 threads the bilayer; the sequence is MLFLLFLLMYLFTLLGNLLIM. The Cytoplasmic segment spans residues 47–54; it reads ATVWSERS. Residues 55 to 75 form a helical membrane-spanning segment; the sequence is LHMPMYLFLCALSITEILYTV. Residues 76–99 are Extracellular-facing; the sequence is AIIPRMLADLLSTQRSIAFLACAS. Cysteines 97 and 189 form a disulfide. A helical membrane pass occupies residues 100–120; sequence QMFFSFSFGFTHSFLLTVMGY. The Cytoplasmic portion of the chain corresponds to 121–139; it reads DRYVAICHPLRYNVLMSLR. Residues 140 to 160 traverse the membrane as a helical segment; that stretch reads GCTCRVGCSWAGGLVMGMVVT. Residues 161-197 lie on the Extracellular side of the membrane; the sequence is SAIFHLAFCGHKEIHHFFCHVPPLLKLACGDDVLVVA. A helical transmembrane segment spans residues 198–218; that stretch reads KGVGLVCITALLGCFLLILLS. Topologically, residues 219-238 are cytoplasmic; the sequence is YAFIVAAILKIPSAEGRNKA. A helical membrane pass occupies residues 239–259; it reads FSTCASHLTVVVVHYGFASVI. Residues 260 to 272 are Extracellular-facing; it reads YLKPKGPQSPEGD. Residues 273-293 form a helical membrane-spanning segment; sequence TLMGITYTVLTPFLSPIIFSL. Topologically, residues 294–315 are cytoplasmic; the sequence is RNKELKVAMKKTCFTKLFPQNC.

This sequence belongs to the G-protein coupled receptor 1 family.

Its subcellular location is the cell membrane. In terms of biological role, odorant receptor. In Homo sapiens (Human), this protein is Olfactory receptor 10H5 (OR10H5).